Here is a 252-residue protein sequence, read N- to C-terminus: Zinc import ATP-binding protein ZnuC (252 aa).

Residues Val-5–Arg-220 form the ABC transporter domain. Residue Gly-37–Ser-44 participates in ATP binding.

This sequence belongs to the ABC transporter superfamily. Zinc importer (TC 3.A.1.15.5) family. The complex is composed of two ATP-binding proteins (ZnuC), two transmembrane proteins (ZnuB) and a solute-binding protein (ZnuA).

It localises to the cell inner membrane. The catalysed reaction is Zn(2+)(out) + ATP(in) + H2O(in) = Zn(2+)(in) + ADP(in) + phosphate(in) + H(+)(in). Functionally, part of the ABC transporter complex ZnuABC involved in zinc import. Responsible for energy coupling to the transport system. The sequence is that of Zinc import ATP-binding protein ZnuC from Yersinia enterocolitica serotype O:8 / biotype 1B (strain NCTC 13174 / 8081).